The following is a 275-amino-acid chain: Large ribosomal subunit protein uL2 (275 aa).

Residues 221-275 (RGSAMTPRDHPHGGGEGKAPRGMPPKTPWGKPALGKRTRRNKKSDRFIIRRRYEA) form a disordered region. The segment covering 227 to 239 (PRDHPHGGGEGKA) has biased composition (basic and acidic residues). Basic residues predominate over residues 254–263 (LGKRTRRNKK). Basic and acidic residues predominate over residues 264-275 (SDRFIIRRRYEA).

Belongs to the universal ribosomal protein uL2 family. As to quaternary structure, part of the 50S ribosomal subunit. Forms a bridge to the 30S subunit in the 70S ribosome.

One of the primary rRNA binding proteins. Required for association of the 30S and 50S subunits to form the 70S ribosome, for tRNA binding and peptide bond formation. It has been suggested to have peptidyltransferase activity; this is somewhat controversial. Makes several contacts with the 16S rRNA in the 70S ribosome. The chain is Large ribosomal subunit protein uL2 from Thermomicrobium roseum (strain ATCC 27502 / DSM 5159 / P-2).